A 321-amino-acid polypeptide reads, in one-letter code: Ribose-phosphate pyrophosphokinase (321 aa).

ATP is bound by residues 44 to 46 (DGE) and 103 to 104 (RQ). H137 and D179 together coordinate Mg(2+). K202 is a catalytic residue. D-ribose 5-phosphate-binding positions include R204, D228, and 232–236 (DTAGT).

The protein belongs to the ribose-phosphate pyrophosphokinase family. Class I subfamily. In terms of assembly, homohexamer. It depends on Mg(2+) as a cofactor.

It localises to the cytoplasm. The catalysed reaction is D-ribose 5-phosphate + ATP = 5-phospho-alpha-D-ribose 1-diphosphate + AMP + H(+). Its pathway is metabolic intermediate biosynthesis; 5-phospho-alpha-D-ribose 1-diphosphate biosynthesis; 5-phospho-alpha-D-ribose 1-diphosphate from D-ribose 5-phosphate (route I): step 1/1. Its function is as follows. Involved in the biosynthesis of the central metabolite phospho-alpha-D-ribosyl-1-pyrophosphate (PRPP) via the transfer of pyrophosphoryl group from ATP to 1-hydroxyl of ribose-5-phosphate (Rib-5-P). This chain is Ribose-phosphate pyrophosphokinase, found in Staphylococcus saprophyticus subsp. saprophyticus (strain ATCC 15305 / DSM 20229 / NCIMB 8711 / NCTC 7292 / S-41).